Reading from the N-terminus, the 1700-residue chain is MYVNQIDDIIDGILNKLYFEGLSNDESFNSIVNSNKINFVEYREQINKFIDDFVKSIDLTEIRKIINNKDNLNRIIDIIKRYVAYYYFLSIAYNYTGSLKDFRNNMIQYSKLQESSTFIIRNFFDTENNYQLIKYFKIIKDTSKILLMTDLQRKTLNPLDVKDTIDFLNGLGKEYINNYLLMITVVDNEDTVNINPHNLIKTIVFGELYKNQERNLVFEILNEIEEDKEEYTYIDIVVSSDETNDLNNFRQIFLGEDDAEARARDLFELANETNRVTTIETVETKNNDLIALKIITPIVDDFLRYHRDTERLDAESGPVNIPIVSNNNSKNVQLALLYQQRKKKENTRAQLVINKLDAILDYYSPNVKNNPEFISEIKKYFQNPLSYRKAVLHNYLDEVNVIDKIRKQGKKAMENNEYFLELMQIITHAYFNFKDFKNFGTSINLFNTKPVNMLRYSNIEFQNQMSNLEVDVHTGIEGQSVNLVGLAIGPFNDEPVSCTKKSDLLDIRKIQITYMKNDQPVTRSTDNGYKAFLKIIKHFYINTLEIREEPEFSIYNNFDDIRKLNPDIFGKMIYWTYNTELDTFEMDTYENIKSNSVQDIIRFMNAMIYDKIMDFLDKKLVLLIETHTNLSLSKIESLIQIFSNMNQLSIDQEERRDLVISNFLQKKSQETTIVPKKNLEIIPLPEYQPLNLKKPFVIGISMINPLNPQPYIKLEAYSRTTKDRGIIQATHGKCKHESEWNEINKVKNQNLNKYNSLVTAFIEKYHLETTQLDYVCKVCGQILPLKRYVQDGSFNNNTQQFVTAYVPIDIPLEEIKEYRKYVLAIRYIDALINRVSLITNTNMLVGTNTNVRQRRKGLVKNIIDIILKHNSVNMRKNISDVERSEYLAKKYNINKDLNEVYFFELDDSIFNFTPTASNTEITLNKLKFNNILLYFILIFITELNGPQITMMATDKIAGNIYVFLKYGQKLFGDLLIKTNINSNETAPITQYPVLCYLLYLLSYYLVKYKLWYQPGENTKVYNPYYSKVIINSFVDLFNGISSDAGRITDDYVYKLTVSKMYTQLNTTYRNNEIINILRRNQSKYDTRSSGIDTTQVTTENEIPTYPIANPINIPVKPRAIPDFKKSSGIIFDREDKILYPIQLTNTDITNCPIGSYHAWVSDGHDIRCTICGEKGSEVTGSVIRLDANYYYSLNNIANRRCIRGTLHDFIDKNGKLVCSICGHTPNETYDKPDLDKLMDNINKIDDQNAENLLRNIHNQQIKYENQQKVVEDFIREIKTDYAKDSNNKLYGRLGPICDKLITIFETYLGSNVNLDIDKYPVYLRNNIYIIDHSYNGTPLDKPVIFSQNENRILFRENHQFFKTDVYYYTDNRLQIDVFYHAVTLKLLGYKEKHKEYTRVAKTNSYLKINYSIMERLLMLGYKTKYIDIEDNFVRNSSRIKDVNTNYFQIIDNLIKDHINKIKKIIDKFSSTIYKIKNYQNQLNEEQEPIYLQSSQDIDKLISKYFNIIKIFNIGEDDKAFDNWNYLRTNFEYQEINWLDTNVRPSENMYVNSELVNYYDISSSEMMYYLVDQLISIIDSNPEKITRSNLCQMMVEIIMYIYNIYNIDEYKNILEFKRFDYIINGSSVMVDMLRRGQGLEQSKELEQHLDDTEPDIMQDMDGEPQEADELEDLKEEAESLDIEGDYFAEEDEDYAQEDFIE.

The chain crosses the membrane as a helical span at residues 986 to 1006 (APITQYPVLCYLLYLLSYYLV). Coiled coils occupy residues 1246-1278 (DQNAENLLRNIHNQQIKYENQQKVVEDFIREIK) and 1657-1684 (QDMDGEPQEADELEDLKEEAESLDIEGD). The segment at 1650 to 1700 (DTEPDIMQDMDGEPQEADELEDLKEEAESLDIEGDYFAEEDEDYAQEDFIE) is disordered. Residues 1651–1700 (TEPDIMQDMDGEPQEADELEDLKEEAESLDIEGDYFAEEDEDYAQEDFIE) show a composition bias toward acidic residues.

The protein resides in the host membrane. Its subcellular location is the virion. This is an uncharacterized protein from Acanthamoeba polyphaga (Amoeba).